The sequence spans 1240 residues: DNA-directed RNA polymerase subunit beta (1240 aa).

This sequence belongs to the RNA polymerase beta chain family. In terms of assembly, the RNAP catalytic core consists of 2 alpha, 1 beta, 1 beta' and 1 omega subunit. When a sigma factor is associated with the core the holoenzyme is formed, which can initiate transcription.

It catalyses the reaction RNA(n) + a ribonucleoside 5'-triphosphate = RNA(n+1) + diphosphate. Its function is as follows. DNA-dependent RNA polymerase catalyzes the transcription of DNA into RNA using the four ribonucleoside triphosphates as substrates. This Phytoplasma australiense protein is DNA-directed RNA polymerase subunit beta.